Reading from the N-terminus, the 257-residue chain is MDRIIEKLDHGWWVVSHEQKLWLPKGELPYGEAANFDLVGQRALQIGEWQGEPVWLVQQQRRHDMGSVRQVIDLDVGLFQLAGRGVQLAEFYRSHKYCGYCGHEMYPSKTEWAMLCSHCRERYYPQIAPCIIVAIRRDDSILLAQHTRHRNGVHTVLAGFVEVGETLEQAVAREVMEESGIKVKNLRYVTSQPWPFPQSLMTAFMAEYDSGEIVIDPKELLEANWYRYDDLPLLPPPGTVARRLIEDTVAMCRAEYE.

Substrate is bound by residues K25 and R69. Zn(2+) contacts are provided by C98 and C101. E111 contributes to the substrate binding site. Residues C116 and C119 each contribute to the Zn(2+) site. Y124 provides a ligand contact to substrate. A Nudix hydrolase domain is found at 125–248 (PQIAPCIIVA…TVARRLIEDT (124 aa)). Residues A158, E174, and E178 each contribute to the a divalent metal cation site. The Nudix box motif lies at 159-180 (GFVEVGETLEQAVAREVMEESG). A substrate-binding site is contributed by 192–199 (QPWPFPQS). An a divalent metal cation-binding site is contributed by E219. A241 is a substrate binding site.

This sequence belongs to the Nudix hydrolase family. NudC subfamily. Homodimer. It depends on Mg(2+) as a cofactor. Mn(2+) is required as a cofactor. Requires Zn(2+) as cofactor.

It catalyses the reaction a 5'-end NAD(+)-phospho-ribonucleoside in mRNA + H2O = a 5'-end phospho-adenosine-phospho-ribonucleoside in mRNA + beta-nicotinamide D-ribonucleotide + 2 H(+). The catalysed reaction is NAD(+) + H2O = beta-nicotinamide D-ribonucleotide + AMP + 2 H(+). The enzyme catalyses NADH + H2O = reduced beta-nicotinamide D-ribonucleotide + AMP + 2 H(+). Its function is as follows. mRNA decapping enzyme that specifically removes the nicotinamide adenine dinucleotide (NAD) cap from a subset of mRNAs by hydrolyzing the diphosphate linkage to produce nicotinamide mononucleotide (NMN) and 5' monophosphate mRNA. The NAD-cap is present at the 5'-end of some mRNAs and stabilizes RNA against 5'-processing. Has preference for mRNAs with a 5'-end purine. Catalyzes the hydrolysis of a broad range of dinucleotide pyrophosphates. This Escherichia coli O7:K1 (strain IAI39 / ExPEC) protein is NAD-capped RNA hydrolase NudC.